The primary structure comprises 325 residues: Phospholipid phosphatase-related protein type 1 (325 aa).

3 consecutive transmembrane segments (helical) span residues 11–31, 67–87, and 127–147; these read YSIIPCFIFVELVIMAGTVLL, FISPLVLYCVLAATPTAIIFI, and FIGVFAFGLFATDIFVNAGQV. N-linked (GlcNAc...) asparagine glycosylation is present at Asn163. 3 consecutive transmembrane segments (helical) span residues 201 to 218, 230 to 247, and 257 to 277; these read AALSIYSALYATMYITST, VLCLGTLCCAFLTGLNRV, and VIGGFILGTAIALFLGLCVVH. N-linked (GlcNAc...) asparagine glycosylation occurs at Asn316.

Belongs to the PA-phosphatase related phosphoesterase family.

The protein localises to the cell membrane. It is found in the cell projection. The protein resides in the neuron projection. Functionally, may play a role in neurite outgrowth and neurogenesis. The sequence is that of Phospholipid phosphatase-related protein type 1 from Xenopus tropicalis (Western clawed frog).